The primary structure comprises 167 residues: Anaerobic nitrite reductase NSHB4 (167 aa).

The Globin domain occupies R12–K162. A Homodimerization motif is present at residues E45–S49. S55, H73, R103, T107, and H108 together coordinate heme b. The Homodimerization motif lies at D115–E127.

It belongs to the plant globin family. Homodimer. It depends on heme b as a cofactor.

It is found in the cytoplasm. The protein localises to the nucleus. It carries out the reaction Fe(III)-heme b-[protein] + nitric oxide + H2O = Fe(II)-heme b-[protein] + nitrite + 2 H(+). Functionally, phytoglobin that reduces nitrite to nitric oxide under anoxic conditions (e.g. during flooding or in waterlogged soil). May not function as an oxygen storage or transport protein. Has an unusually high affinity for O(2) through an hexacoordinate heme iron because of a very low dissociation constant. In Oryza sativa subsp. indica (Rice), this protein is Anaerobic nitrite reductase NSHB4.